The chain runs to 90 residues: MMLKMGAMFVLLLLFILPSSQQEGDVQARKTHLKRGFYGTLAMSTRGCSGTCHRREDGKCRGTCDCSGYSYCRCGDAHHFYRGCTCSCQG.

Residues 1–21 form the signal peptide; sequence MMLKMGAMFVLLLLFILPSSQ. Residues 22–46 constitute a propeptide that is removed on maturation; the sequence is QEGDVQARKTHLKRGFYGTLAMSTR. A Glutamine amide modification is found at glutamine 89.

It belongs to the conotoxin S superfamily. Post-translationally, contains 5 disulfide bonds. As to expression, expressed by the venom duct.

It is found in the secreted. This is Conotoxin Ca8.2 from Conus caracteristicus (Characteristic cone).